Here is a 346-residue protein sequence, read N- to C-terminus: uncharacterized protein (346 aa).

The helical transmembrane segment at 7-27 threads the bilayer; sequence AMVILLIICGTYVLFIQYGSV. The disordered stretch occupies residues 29-48; it reads EKKSNDSEPQVSNEEAQSGK. Residues 35–44 are compositionally biased toward polar residues; sequence SEPQVSNEEA. The region spanning 231 to 342 is the SCP domain; sequence LDLTNVIRVK…VDRKYYTQNF (112 aa).

Its subcellular location is the cell membrane. This is an uncharacterized protein from Bacillus subtilis (strain 168).